The following is a 394-amino-acid chain: V-type proton ATPase subunit C (394 aa).

Ser-17 is subject to Phosphoserine.

This sequence belongs to the V-ATPase C subunit family. As to quaternary structure, V-ATPase is a heteromultimeric enzyme composed of a peripheral catalytic V1 complex (components A to H) attached to an integral membrane V0 proton pore complex (components: a, c, c', c'', d, e, f and VOA1).

It localises to the cytoplasm. The protein resides in the vacuole membrane. In terms of biological role, subunit of the V1 complex of vacuolar(H+)-ATPase (V-ATPase), a multisubunit enzyme composed of a peripheral complex (V1) that hydrolyzes ATP and a membrane integral complex (V0) that translocates protons. V-ATPase is responsible for acidifying and maintaining the pH of intracellular compartments. Subunit C is necessary for the assembly of the catalytic sector of the enzyme and is likely to have a specific function in its catalytic activity. Reversibly leaves the enzyme after glucose depletion, causing the catalytic subcomplex V1 to detach from the V0 section. This is V-type proton ATPase subunit C from Schizosaccharomyces pombe (strain 972 / ATCC 24843) (Fission yeast).